A 1189-amino-acid polypeptide reads, in one-letter code: Tyrosine-protein phosphatase non-receptor type 14 (1189 aa).

The FERM domain maps to 21 to 306 (FVTRIRLLDS…TRHKFYKQNK (286 aa)). Residues serine 314, serine 461, serine 486, serine 591, serine 593, serine 594, and serine 646 each carry the phosphoserine modification. The disordered stretch occupies residues 744–775 (ARIPNRPPPEYPGPRKSVSNGALRQDQGTPLP). Polar residues predominate over residues 760–771 (SVSNGALRQDQG). Serine 833 carries the post-translational modification Phosphoserine. The region spanning 911-1182 (VFTEYEQIPN…KFVYQVLVQF (272 aa)) is the Tyrosine-protein phosphatase domain. Cysteine 1123 serves as the catalytic Phosphocysteine intermediate. Substrate contacts are provided by residues 1123–1129 (CSAGVGR) and glutamine 1167.

The protein belongs to the protein-tyrosine phosphatase family. Non-receptor class subfamily. In terms of assembly, interacts with FLT4; the interaction is enhanced by stimulation with VEGFC. Interacts (via PPxY motifs) with YAP1 (via WW domains); this interaction leads to the cytoplasmic sequestration of YAP1 and inhibits its transcriptional coactivator activity. In terms of processing, ubiquitinated by the ECS (Elongin BC-CUL2/5-SOCS-box protein)/LRR1 E3 ligase complex and subsequently targeted to proteasomal degradation. In terms of tissue distribution, thymus; in cells of both hematopoietic and non-hematopoietic origins.

It is found in the cytoplasm. The protein resides in the cytoskeleton. It localises to the nucleus. The enzyme catalyses O-phospho-L-tyrosyl-[protein] + H2O = L-tyrosyl-[protein] + phosphate. Protein tyrosine phosphatase which may play a role in the regulation of lymphangiogenesis, cell-cell adhesion, cell-matrix adhesion, cell migration, cell growth and also regulates TGF-beta gene expression, thereby modulating epithelial-mesenchymal transition. Mediates beta-catenin dephosphorylation at adhesion junctions. Acts as a negative regulator of the oncogenic property of YAP, a downstream target of the hippo pathway, in a cell density-dependent manner. May function as a tumor suppressor. The polypeptide is Tyrosine-protein phosphatase non-receptor type 14 (Ptpn14) (Mus musculus (Mouse)).